A 185-amino-acid chain; its full sequence is Adenylyl-sulfate kinase (185 aa).

13 to 20 contacts ATP; sequence GLSGAGKS. Catalysis depends on Ser86, which acts as the Phosphoserine intermediate.

Belongs to the APS kinase family.

It carries out the reaction adenosine 5'-phosphosulfate + ATP = 3'-phosphoadenylyl sulfate + ADP + H(+). The protein operates within sulfur metabolism; hydrogen sulfide biosynthesis; sulfite from sulfate: step 2/3. Catalyzes the synthesis of activated sulfate. This Myxococcus xanthus (strain DK1622) protein is Adenylyl-sulfate kinase.